A 450-amino-acid chain; its full sequence is Phospho-2-dehydro-3-deoxyheptonate aldolase (450 aa).

Polar residues predominate over residues 1–13; it reads MTVNAKTSPSAGN. Residues 1 to 20 are disordered; the sequence is MTVNAKTSPSAGNTWRDLPA.

The protein belongs to the class-II DAHP synthase family. As to quaternary structure, homodimer.

It carries out the reaction D-erythrose 4-phosphate + phosphoenolpyruvate + H2O = 7-phospho-2-dehydro-3-deoxy-D-arabino-heptonate + phosphate. The protein operates within metabolic intermediate biosynthesis; chorismate biosynthesis; chorismate from D-erythrose 4-phosphate and phosphoenolpyruvate: step 1/7. The protein is Phospho-2-dehydro-3-deoxyheptonate aldolase (aroH) of Streptomyces coelicolor (strain ATCC BAA-471 / A3(2) / M145).